A 668-amino-acid polypeptide reads, in one-letter code: DNA ligase (668 aa).

Residues 34–38, 83–84, and E117 each bind NAD(+); these read DAEYD and SL. The N6-AMP-lysine intermediate role is filled by K119. Residues R140, E177, K293, and K317 each contribute to the NAD(+) site. The Zn(2+) site is built by C411, C414, C429, and C434. Residues 591 to 668 enclose the BRCT domain; the sequence is RVGGRFTGKT…SEDDFLELMQ (78 aa).

The protein belongs to the NAD-dependent DNA ligase family. LigA subfamily. Requires Mg(2+) as cofactor. Mn(2+) serves as cofactor.

It carries out the reaction NAD(+) + (deoxyribonucleotide)n-3'-hydroxyl + 5'-phospho-(deoxyribonucleotide)m = (deoxyribonucleotide)n+m + AMP + beta-nicotinamide D-nucleotide.. Its function is as follows. DNA ligase that catalyzes the formation of phosphodiester linkages between 5'-phosphoryl and 3'-hydroxyl groups in double-stranded DNA using NAD as a coenzyme and as the energy source for the reaction. It is essential for DNA replication and repair of damaged DNA. The protein is DNA ligase of Citrifermentans bemidjiense (strain ATCC BAA-1014 / DSM 16622 / JCM 12645 / Bem) (Geobacter bemidjiensis).